Here is a 327-residue protein sequence, read N- to C-terminus: Surface protein P12p (327 aa).

2 6-Cys domains span residues 21–168 (NIEI…LKKN) and 169–304 (IIFG…FSNY). Disulfide bonds link cysteine 25/cysteine 60, cysteine 74/cysteine 144, cysteine 93/cysteine 142, cysteine 173/cysteine 208, cysteine 223/cysteine 285, and cysteine 234/cysteine 283. N-linked (GlcNAc...) asparagine glycans are attached at residues asparagine 246, asparagine 264, and asparagine 298.

Its subcellular location is the cell surface. The protein localises to the cell membrane. This chain is Surface protein P12p (P12p), found in Plasmodium berghei (strain Anka).